Reading from the N-terminus, the 100-residue chain is Large ribosomal subunit protein eL21 (100 aa).

It belongs to the eukaryotic ribosomal protein eL21 family.

In Pyrobaculum arsenaticum (strain DSM 13514 / JCM 11321 / PZ6), this protein is Large ribosomal subunit protein eL21.